The following is a 454-amino-acid chain: Methylenetetrahydrofolate--tRNA-(uracil-5-)-methyltransferase TrmFO (454 aa).

An FAD-binding site is contributed by 9 to 14; the sequence is GAGLAG. A disordered region spans residues 432 to 454; that stretch reads LERVSPPSRETGEPTGAEQVDLA.

This sequence belongs to the MnmG family. TrmFO subfamily. FAD is required as a cofactor.

The protein resides in the cytoplasm. The enzyme catalyses uridine(54) in tRNA + (6R)-5,10-methylene-5,6,7,8-tetrahydrofolate + NADH + H(+) = 5-methyluridine(54) in tRNA + (6S)-5,6,7,8-tetrahydrofolate + NAD(+). It carries out the reaction uridine(54) in tRNA + (6R)-5,10-methylene-5,6,7,8-tetrahydrofolate + NADPH + H(+) = 5-methyluridine(54) in tRNA + (6S)-5,6,7,8-tetrahydrofolate + NADP(+). Functionally, catalyzes the folate-dependent formation of 5-methyl-uridine at position 54 (M-5-U54) in all tRNAs. The sequence is that of Methylenetetrahydrofolate--tRNA-(uracil-5-)-methyltransferase TrmFO from Pelobacter propionicus (strain DSM 2379 / NBRC 103807 / OttBd1).